We begin with the raw amino-acid sequence, 414 residues long: Dihydroorotase (414 aa).

Histidine 56 and histidine 58 together coordinate Zn(2+). Substrate is bound by residues 58–60 (HFR) and asparagine 90. Zn(2+) is bound by residues lysine 138, histidine 171, histidine 219, and aspartate 280. Position 138 is an N6-carboxylysine (lysine 138). Aspartate 280 is a catalytic residue. Histidine 284 is a substrate binding site.

The protein belongs to the metallo-dependent hydrolases superfamily. DHOase family. Class I DHOase subfamily. The cofactor is Zn(2+).

It catalyses the reaction (S)-dihydroorotate + H2O = N-carbamoyl-L-aspartate + H(+). It functions in the pathway pyrimidine metabolism; UMP biosynthesis via de novo pathway; (S)-dihydroorotate from bicarbonate: step 3/3. Its function is as follows. Catalyzes the reversible cyclization of carbamoyl aspartate to dihydroorotate. The chain is Dihydroorotase from Thermoplasma acidophilum (strain ATCC 25905 / DSM 1728 / JCM 9062 / NBRC 15155 / AMRC-C165).